Here is a 339-residue protein sequence, read N- to C-terminus: UDP-N-acetylenolpyruvoylglucosamine reductase (339 aa).

Positions Val-19 to Val-189 constitute an FAD-binding PCMH-type domain. Arg-166 is an active-site residue. Ser-239 functions as the Proton donor in the catalytic mechanism. Glu-335 is a catalytic residue.

This sequence belongs to the MurB family. Requires FAD as cofactor.

It localises to the cytoplasm. It carries out the reaction UDP-N-acetyl-alpha-D-muramate + NADP(+) = UDP-N-acetyl-3-O-(1-carboxyvinyl)-alpha-D-glucosamine + NADPH + H(+). It functions in the pathway cell wall biogenesis; peptidoglycan biosynthesis. Its function is as follows. Cell wall formation. This chain is UDP-N-acetylenolpyruvoylglucosamine reductase, found in Pseudomonas fluorescens (strain Pf0-1).